Consider the following 807-residue polypeptide: Glycerol-3-phosphate acyltransferase (807 aa).

An HXXXXD motif motif is present at residues 308-313 (CHRSHM).

It belongs to the GPAT/DAPAT family.

It localises to the cell inner membrane. The enzyme catalyses sn-glycerol 3-phosphate + an acyl-CoA = a 1-acyl-sn-glycero-3-phosphate + CoA. It participates in phospholipid metabolism; CDP-diacylglycerol biosynthesis; CDP-diacylglycerol from sn-glycerol 3-phosphate: step 1/3. The protein is Glycerol-3-phosphate acyltransferase of Shewanella baltica (strain OS155 / ATCC BAA-1091).